The following is a 79-amino-acid chain: Ferredoxin oxidoreductase 1 subunit ForD (79 aa).

4Fe-4S ferredoxin-type domains lie at 3–35 (YVAQVIKDECSKYNCKQCTLFCPEPNTLMYTDE) and 37–65 (HHAYVNTLRCKGCALCVYVCSELLKRDSI). Residues C12, C17, C20, C24, C46, C49, C52, and C56 each coordinate [4Fe-4S] cluster.

In terms of assembly, heterotetramer of one alpha, one beta, one delta and one gamma chain. It depends on [4Fe-4S] cluster as a cofactor.

This chain is Ferredoxin oxidoreductase 1 subunit ForD (forD1), found in Aquifex aeolicus (strain VF5).